The primary structure comprises 220 residues: Germin-like protein subfamily 2 member 4 (220 aa).

The first 21 residues, 1 to 21, serve as a signal peptide directing secretion; it reads MDSRCFGFFFTLLSLNVIVLA. Cysteine 31 and cysteine 46 are joined by a disulfide. 2 N-linked (GlcNAc...) asparagine glycosylation sites follow: asparagine 51 and asparagine 69. The 152-residue stretch at 58–209 folds into the Cupin type-1 domain; it reads FFAGIGKPAV…TFQIGTKEIE (152 aa). The Mn(2+) site is built by histidine 108, histidine 110, glutamate 115, and histidine 154.

Belongs to the germin family. As to quaternary structure, oligomer (believed to be a pentamer but probably hexamer).

It is found in the secreted. The protein resides in the extracellular space. The protein localises to the apoplast. In terms of biological role, may play a role in plant defense. Probably has no oxalate oxidase activity even if the active site is conserved. The chain is Germin-like protein subfamily 2 member 4 (GLP10) from Arabidopsis thaliana (Mouse-ear cress).